The primary structure comprises 110 residues: Ribonuclease (110 aa).

Glu73 serves as the catalytic Proton acceptor. His102 (proton donor) is an active-site residue.

It belongs to the ribonuclease N1/T1 family.

The protein resides in the secreted. Functionally, hydrolyzes phosphodiester bonds in RNA, poly- and oligoribonucleotides resulting in 3'-nucleoside monophosphates via 2',3'-cyclophosphate intermediates. This chain is Ribonuclease, found in Niallia circulans (Bacillus circulans).